The following is a 230-amino-acid chain: UPF0758 protein ABC2615 (230 aa).

In terms of domain architecture, MPN spans Val-104–Phe-226. Positions 175, 177, and 188 each coordinate Zn(2+). Residues His-175–Asp-188 carry the JAMM motif motif.

The protein belongs to the UPF0758 family.

This chain is UPF0758 protein ABC2615, found in Shouchella clausii (strain KSM-K16) (Alkalihalobacillus clausii).